We begin with the raw amino-acid sequence, 387 residues long: MEDDAPVIYGLEFQARALTPQTAETDAIRFLVGTQSLKYDNQIHIIDFDDENNIINKNVLLHQAGEIWHISASPADRGVLATCYNRTSDSKVLTCAAVWRMPKELESGSHESPDDSSSTAQTLELLCHLDNTAHSNMACVVWEPMGDGKKIISLADNHILLWDLQESSSQAVLASSASLGGKGQLKFTSGRWSPHHNCTQVATANDTTLRGWDTRTMSQIYCIENAHGQLVRDLDFNPNKQYYLASCGDDCKVKFWDTRNVTEPVKTLEEHSHWVWNVRYNHSHDQLVLTGSSDSRVILSNMVSISSEPFGHLVDDDDISDQEDHRSEEKSKEPLQDNVIATYEEHEDSVYAVDWSSADPWLFASLSYDGRLVINRVPRALKYHILL.

N-acetylmethionine is present on methionine 1. WD repeat units follow at residues 132-172 (TAHS…SQAV), 180-222 (GGKG…QIYC), 226-266 (AHGQ…EPVK), and 270-310 (EHSH…SEPF). Residues 310 to 334 (FGHLVDDDDISDQEDHRSEEKSKEP) are disordered. Serine 320 carries the phosphoserine modification. Basic and acidic residues predominate over residues 322–334 (QEDHRSEEKSKEP). Residues 345 to 385 (EHEDSVYAVDWSSADPWLFASLSYDGRLVINRVPRALKYHI) form a WD 5 repeat.

Belongs to the WD repeat EIPR1 family. As to quaternary structure, interacts with two multisubunit tethering complexes: EARP composed of VPS50, VPS51, VPS52 and VPS53 subunits and GARP complex composed of VPS51, VPS52, VPS53 and VPS54 subunits. Interacts with SNAP29.

It localises to the golgi apparatus. The protein localises to the trans-Golgi network. Acts as a component of endosomal retrieval machinery that is involved in protein transport from early endosomes to either recycling endosomes or the trans-Golgi network. Mediates the recruitment of Golgi-associated retrograde protein (GARP) complex to the trans-Golgi network and controls early endosome-to-Golgi transport of internalized protein. Promotes the recycling of internalized transferrin receptor (TFRC) to the plasma membrane through interaction with endosome-associated recycling protein (EARP) complex. Controls proper insulin distribution and secretion, and retention of cargo in mature dense core vesicles. Required for the stability of the endosome-associated retrograde protein (EARP) complex subunits and for proper localization and association of EARP with membranes. The protein is EARP and GARP complex-interacting protein 1 of Macaca fascicularis (Crab-eating macaque).